We begin with the raw amino-acid sequence, 96 residues long: Protein RnfH (96 aa).

This sequence belongs to the UPF0125 (RnfH) family.

The protein is Protein RnfH of Escherichia coli O81 (strain ED1a).